The chain runs to 272 residues: Soluble interferon gamma receptor OPG193 (272 aa).

The N-terminal stretch at 1-13 is a signal peptide; it reads MRYIIILAVLFIN. 3 N-linked (GlcNAc...) asparagine; by host glycosylation sites follow: asparagine 42, asparagine 150, and asparagine 267.

This sequence belongs to the type II cytokine receptor family. In terms of assembly, homodimer. Interacts with host IFNG.

It localises to the secreted. Counteracts the antiviral effects of host IFN-gamma. Acts as a soluble IFN-gamma receptor and thus inhibits the interaction between host IFN-gamma and its receptor. In Homo sapiens (Human), this protein is Soluble interferon gamma receptor OPG193 (OPG193).